Reading from the N-terminus, the 271-residue chain is 3-methyl-2-oxobutanoate hydroxymethyltransferase (271 aa).

The Mg(2+) site is built by Asp53 and Asp92. 3-methyl-2-oxobutanoate is bound by residues 53–54, Asp92, and Lys120; that span reads DS. Glu122 provides a ligand contact to Mg(2+). Residue Glu189 is the Proton acceptor of the active site.

The protein belongs to the PanB family. In terms of assembly, homodecamer; pentamer of dimers. Mg(2+) is required as a cofactor.

It is found in the cytoplasm. The enzyme catalyses 3-methyl-2-oxobutanoate + (6R)-5,10-methylene-5,6,7,8-tetrahydrofolate + H2O = 2-dehydropantoate + (6S)-5,6,7,8-tetrahydrofolate. Its pathway is cofactor biosynthesis; (R)-pantothenate biosynthesis; (R)-pantoate from 3-methyl-2-oxobutanoate: step 1/2. Catalyzes the reversible reaction in which hydroxymethyl group from 5,10-methylenetetrahydrofolate is transferred onto alpha-ketoisovalerate to form ketopantoate. This Burkholderia thailandensis (strain ATCC 700388 / DSM 13276 / CCUG 48851 / CIP 106301 / E264) protein is 3-methyl-2-oxobutanoate hydroxymethyltransferase.